We begin with the raw amino-acid sequence, 277 residues long: UPF0276 protein PP_2398 (277 aa).

Belongs to the UPF0276 family.

This Pseudomonas putida (strain ATCC 47054 / DSM 6125 / CFBP 8728 / NCIMB 11950 / KT2440) protein is UPF0276 protein PP_2398.